Here is a 687-residue protein sequence, read N- to C-terminus: MNPNFSSMIDRYKHQQLRIGSVSPQQISAWATKILPNGEIVGEVKKPYTFLYKTNKPEKDGLFCERIFGPIKSGICACGNYRVIGDEKEEPKFCEQCGVEFIDSRIRRYQMGYIKLACPVTHVWYLKRLPSYIANLLDKPLKELEGLVYCDFSFARPITKKPTFLRLRGLFEYEIQSWKYSIPLFFTTQGFDTFRNREISTGAGAIREQLADLDLRIIIENSLLEWKDLGEEEHTGNEWEDRKVGRRKDFLVRRMELAKHFLRTNIEPEWMVLCLLPVLPPELRPIIQIDGGKLMSSDINELYRRVIYRNNTLTDLLTTSRSTPGELVMCQEKLVQEAVDTLLDNGIRGQPMRDGHNKIYKSFSDLIEGKEGRFRETLLGKRVDYSGRSVIVVGPSLSLHRCGLPREIAIELFQTFVIRGLIRQHLASNIGVAKSKIREKEPIVWEILQEVMQGHPVLLNRAPTLHRLGIQAFQPVLVEGRAICLHPLVCKGFNADFDGDQMAVHVPLSLEAQVEARLLMFSHMNLLSPAIGDPISVPTQDMLIGLYVLTSENRRGICLNRYTKCNRRNSQTKRSDNSNYKYKKEPVFCNSYDAIGAYRQKRINLDSPLWLRWRLDQRVITSRETPIEVHYESLGTYYEIYGHYLIVRSLKKEIIFIYIRTTVGHISLYREIEEAIQGFSRAGSSDT.

Residues Cys-76, Cys-78, Cys-94, and Cys-97 each coordinate Zn(2+). Mg(2+) is bound by residues Asp-496, Asp-498, and Asp-500.

This sequence belongs to the RNA polymerase beta' chain family. RpoC1 subfamily. As to quaternary structure, in plastids the minimal PEP RNA polymerase catalytic core is composed of four subunits: alpha, beta, beta', and beta''. When a (nuclear-encoded) sigma factor is associated with the core the holoenzyme is formed, which can initiate transcription. It depends on Mg(2+) as a cofactor. The cofactor is Zn(2+).

It is found in the plastid. The protein localises to the chloroplast. The catalysed reaction is RNA(n) + a ribonucleoside 5'-triphosphate = RNA(n+1) + diphosphate. Its function is as follows. DNA-dependent RNA polymerase catalyzes the transcription of DNA into RNA using the four ribonucleoside triphosphates as substrates. The polypeptide is DNA-directed RNA polymerase subunit beta' (Ipomoea purpurea (Common morning glory)).